The primary structure comprises 281 residues: uncharacterized protein (281 aa).

2 disordered regions span residues 192 to 212 and 227 to 281; these read SNSS…IQET and EDYV…SEEY. The span at 200 to 211 shows a compositional bias: basic and acidic residues; sequence MDKKSDDSKIQE. 2 stretches are compositionally biased toward acidic residues: residues 227 to 240 and 249 to 260; these read EDYV…ISDN and DTDSDLGDLEDP.

It belongs to the cullin family.

This is an uncharacterized protein from Acanthamoeba polyphaga (Amoeba).